The sequence spans 354 residues: uncharacterized protein (354 aa).

The protein belongs to the asfivirus B354L family.

This is an uncharacterized protein from Ornithodoros (relapsing fever ticks).